Consider the following 351-residue polypeptide: Biotin synthase (351 aa).

Positions 44–262 constitute a Radical SAM core domain; the sequence is NRVQVSTLLS…LAVARIMMPK (219 aa). [4Fe-4S] cluster contacts are provided by cysteine 59, cysteine 63, and cysteine 66. [2Fe-2S] cluster contacts are provided by cysteine 103, cysteine 134, cysteine 194, and arginine 266.

It belongs to the radical SAM superfamily. Biotin synthase family. As to quaternary structure, homodimer. Requires [4Fe-4S] cluster as cofactor. [2Fe-2S] cluster serves as cofactor.

The catalysed reaction is (4R,5S)-dethiobiotin + (sulfur carrier)-SH + 2 reduced [2Fe-2S]-[ferredoxin] + 2 S-adenosyl-L-methionine = (sulfur carrier)-H + biotin + 2 5'-deoxyadenosine + 2 L-methionine + 2 oxidized [2Fe-2S]-[ferredoxin]. It participates in cofactor biosynthesis; biotin biosynthesis; biotin from 7,8-diaminononanoate: step 2/2. Its function is as follows. Catalyzes the conversion of dethiobiotin (DTB) to biotin by the insertion of a sulfur atom into dethiobiotin via a radical-based mechanism. The chain is Biotin synthase from Stutzerimonas stutzeri (strain A1501) (Pseudomonas stutzeri).